The primary structure comprises 406 residues: Nicotinate phosphoribosyltransferase (406 aa).

Histidine 227 bears the Phosphohistidine; by autocatalysis mark.

The protein belongs to the NAPRTase family. In terms of processing, transiently phosphorylated on a His residue during the reaction cycle. Phosphorylation strongly increases the affinity for substrates and increases the rate of nicotinate D-ribonucleotide production. Dephosphorylation regenerates the low-affinity form of the enzyme, leading to product release.

It carries out the reaction nicotinate + 5-phospho-alpha-D-ribose 1-diphosphate + ATP + H2O = nicotinate beta-D-ribonucleotide + ADP + phosphate + diphosphate. It functions in the pathway cofactor biosynthesis; NAD(+) biosynthesis; nicotinate D-ribonucleotide from nicotinate: step 1/1. Catalyzes the synthesis of beta-nicotinate D-ribonucleotide from nicotinate and 5-phospho-D-ribose 1-phosphate at the expense of ATP. This is Nicotinate phosphoribosyltransferase from Methanosarcina mazei (strain ATCC BAA-159 / DSM 3647 / Goe1 / Go1 / JCM 11833 / OCM 88) (Methanosarcina frisia).